The following is a 160-amino-acid chain: uncharacterized protein (160 aa).

Zn(2+)-binding residues include Cys-26, Cys-28, Cys-50, and His-61. The segment at 26–69 (CWCGEEIITFTSKTKENPYRRFYRCAIAMKRENEEHLFKWVDEA) adopts a GRF-type; atypical zinc-finger fold.

This is an uncharacterized protein from Arabidopsis thaliana (Mouse-ear cress).